The following is a 428-amino-acid chain: Histone deacetylase 3 (428 aa).

Residues 3–316 form a histone deacetylase region; sequence KTVAYFYDPD…WTYETSLLVE (314 aa). The 1D-myo-inositol 1,4,5,6-tetrakisphosphate site is built by His-17, Gly-21, and Lys-25. His-135 is an active-site residue. 3 residues coordinate Zn(2+): Asp-170, His-172, and Asp-259. Residue Arg-265 coordinates 1D-myo-inositol 1,4,5,6-tetrakisphosphate. Composition is skewed to basic and acidic residues over residues 388–405 and 415–428; these read DRTD…ENYS and DGDH…DVEI. A disordered region spans residues 388–428; the sequence is DRTDEADAEERGPEENYSRPEAPNEFYDGDHDNDKESDVEI. Ser-424 carries the post-translational modification Phosphoserine.

Belongs to the histone deacetylase family. HD type 1 subfamily. In terms of assembly, interacts with HDAC7 and HDAC9. Interacts with DAXX, KDM4A, HDAC10 and DACH1. Found in a complex with NCOR1 and NCOR2. Component of the N-Cor repressor complex, at least composed of NCOR1, NCOR2, HDAC3, TBL1X, TBL1R, CORO2A and GPS2. Interacts with BCOR, MJD2A/JHDM3A, NRIP1, PRDM6 and SRY. Interacts with BTBD14B. Interacts with GLIS2. Interacts (via the DNA-binding domain) with NR2C1; the interaction recruits phosphorylated NR2C1 to PML bodies for sumoylation. Component of the Notch corepressor complex. Interacts with CBFA2T3 and NKAP. Interacts with APEX1; the interaction is not dependent on the acetylated status of APEX1. Interacts with ZMYND15. Interacts with SMRT/NCOR2 and BCL6 on DNA enhancer elements. Interacts with INSM1. Interacts with XBP1 isoform 1; the interaction occurs in endothelial cell (EC) under disturbed flow. Interacts (via C-terminus) with CCAR2 (via N-terminus). Interacts with and deacetylates MEF2D. Interacts with BEND3. Interacts with NKAPL. Interacts with DHX36; this interaction occurs in a RNA-dependent manner. Interacts weakly with CRY1; this interaction is enhanced in the presence of FBXL3. Interacts with FBXL3 and BMAL1. Interacts with NCOR1. Interacts with RARA. Interacts with SETD5. In terms of processing, sumoylated in vitro. Deubiquitinated on 'Lys-63'-linked ubiquitin chains by USP38; leading to a decreased level of histone acetylation.

It is found in the nucleus. It localises to the chromosome. The protein resides in the cytoplasm. The protein localises to the cytosol. It carries out the reaction N(6)-acetyl-L-lysyl-[histone] + H2O = L-lysyl-[histone] + acetate. The enzyme catalyses N(6)-acetyl-L-lysyl-[protein] + H2O = L-lysyl-[protein] + acetate. The catalysed reaction is N(6)-(2E)-butenoyl-L-lysyl-[protein] + H2O = (2E)-2-butenoate + L-lysyl-[protein]. It catalyses the reaction N(6)-(2-hydroxyisobutanoyl)-L-lysyl-[protein] + H2O = 2-hydroxy-2-methylpropanoate + L-lysyl-[protein]. It carries out the reaction N(6)-[(S)-lactoyl]-L-lysyl-[protein] + H2O = (S)-lactate + L-lysyl-[protein]. With respect to regulation, inositol tetraphosphate (1D-myo-inositol 1,4,5,6-tetrakisphosphate) promotes the histone deacetylase activity by acting as an intermolecular glue between HDAC3 and NCOR2, thereby promoting its association with the N-Cor complex, a prerequisite for the histone deacetylase activity. In terms of biological role, histone deacetylase that catalyzes the deacetylation of lysine residues on the N-terminal part of the core histones (H2A, H2B, H3 and H4), and some other non-histone substrates. Histone deacetylation gives a tag for epigenetic repression and plays an important role in transcriptional regulation, cell cycle progression and developmental events. Histone deacetylases act via the formation of large multiprotein complexes, such as N-Cor repressor complex, which activate the histone deacetylase activity. Participates in the BCL6 transcriptional repressor activity by deacetylating the H3 'Lys-27' (H3K27) on enhancer elements, antagonizing EP300 acetyltransferase activity and repressing proximal gene expression. Acts as a molecular chaperone for shuttling phosphorylated NR2C1 to PML bodies for sumoylation. Contributes, together with XBP1 isoform 1, to the activation of NFE2L2-mediated HMOX1 transcription factor gene expression in a PI(3)K/mTORC2/Akt-dependent signaling pathway leading to endothelial cell (EC) survival under disturbed flow/oxidative stress. Regulates both the transcriptional activation and repression phases of the circadian clock in a deacetylase activity-independent manner. During the activation phase, promotes the accumulation of ubiquitinated BMAL1 at the E-boxes and during the repression phase, blocks FBXL3-mediated CRY1/2 ubiquitination and promotes the interaction of CRY1 and BMAL1. The NCOR1-HDAC3 complex regulates the circadian expression of the core clock gene BMAL1 and the genes involved in lipid metabolism in the liver. Also functions as deacetylase for non-histone targets, such as KAT5, MEF2D, MAPK14, RARA and STAT3. Serves as a corepressor of RARA, mediating its deacetylation and repression, leading to inhibition of RARE DNA element binding. In addition to protein deacetylase activity, also acts as a protein-lysine deacylase by recognizing other acyl groups: catalyzes removal of (2E)-butenoyl (crotonyl), lactoyl (lactyl) and 2-hydroxyisobutanoyl (2-hydroxyisobutyryl) acyl groups from lysine residues, leading to protein decrotonylation, delactylation and de-2-hydroxyisobutyrylation, respectively. Catalyzes decrotonylation of MAPRE1/EB1. Mediates delactylation NBN/NBS1, thereby inhibiting DNA double-strand breaks (DSBs) via homologous recombination (HR). The protein is Histone deacetylase 3 of Mus musculus (Mouse).